The primary structure comprises 145 residues: AGLTGRKIIIDTYGGWGAHGGGAFSGKDPTKVDRSGAYIVRQAAKSIVASGLARRCIVQVSYAIGVPEPLSVFVDSYGTGKIPDREILQIVKETFDFRPGMISINLDLKRGGNGRFLKTAAYGHFGREDPDFTWEVVKPLKWEKA.

ATP-binding positions include 6-7 (RK), A23, K27, and K31. K31 is a binding site for L-methionine.

This sequence belongs to the AdoMet synthase family. In terms of assembly, homotetramer. It depends on Mn(2+) as a cofactor. Mg(2+) serves as cofactor. Co(2+) is required as a cofactor. Requires K(+) as cofactor. As to expression, mainly in floral buds and roots.

The protein resides in the cytoplasm. It catalyses the reaction L-methionine + ATP + H2O = S-adenosyl-L-methionine + phosphate + diphosphate. It participates in amino-acid biosynthesis; S-adenosyl-L-methionine biosynthesis; S-adenosyl-L-methionine from L-methionine: step 1/1. Its function is as follows. Catalyzes the formation of S-adenosylmethionine from methionine and ATP. The reaction comprises two steps that are both catalyzed by the same enzyme: formation of S-adenosylmethionine (AdoMet) and triphosphate, and subsequent hydrolysis of the triphosphate. In Petroselinum crispum (Parsley), this protein is S-adenosylmethionine synthase 2 (SMS-2).